Consider the following 1052-residue polypeptide: F-box/WD repeat-containing protein 10 (1052 aa).

The stretch at 169 to 206 (GLNQDITDVCFSPEKDHSSKSATSQVYWTAKTQHTSLP) is one WD 1 repeat. The F-box domain occupies 276–323 (DFIRYLPIHLSKYILRMLDRHTLNKCASVSQHWAAMAQQVKMDLSAHG). 6 WD repeats span residues 409 to 447 (SDTW…AIPV), 451 to 490 (GHAG…CTRI), 493 to 532 (GHQG…KTFR), 534 to 569 (KDPI…LVKT), 572 to 609 (GHEG…ERCL), and 611 to 652 (AFKH…KVLK). A coiled-coil region spans residues 690 to 719 (YAVEKTKQKKNKEKEEEKEENSLMEILSKC). The segment at 766-805 (LQSQGKSKSPRRDADDVEKAQKQGQLETPGKLPSHPKKKS) is disordered. Basic and acidic residues predominate over residues 775 to 786 (PRRDADDVEKAQ). A coiled-coil region spans residues 986-1010 (VLLTVKEEKEHQEAKMKEYQAREST).

Probable substrate-recognition component of a SCF (SKP1-CUL1-F-box protein)-type E3 ubiquitin ligase complex which mediates the ubiquitination and subsequent proteasomal degradation of target proteins. Overexpression is leading to degradation of CBX5 and CBX1. This is F-box/WD repeat-containing protein 10 (FBXW10) from Homo sapiens (Human).